A 568-amino-acid chain; its full sequence is Archaeosine synthase subunit alpha (568 aa).

The PUA domain occupies 496–565; it reads YDALKSYWVK…AKKGVAVKVR (70 aa).

This sequence belongs to the archaeosine synthase type 1 family. As to quaternary structure, forms a robust complex with the archaeosine synthase beta subunit RaSEA, likely an alpha(2)beta(2) heterotetrameric structure. Formation of this complex highly increases lysine transfer activity.

The catalysed reaction is 7-cyano-7-carbaguanosine(15) in tRNA + L-lysine = 7-N-[(5S)-5-amino-5-carboxypentyl]formamidino-7-deazaguanosine(15) in tRNA. The protein operates within tRNA modification; archaeosine-tRNA biosynthesis. Its function is as follows. Functions in the biosynthesis of archaeosine, a modified nucleoside present in the dihydrouridine loop (D-loop) of archaeal tRNAs. Catalyzes the addition of L-lysine to the cyano group of 7-cyano-7-deazaguanine (preQ0)-modified tRNAs at position 15, to generate q0kN15-tRNA, a q0N lysine adduct identified as 7-N-[(5S)-5-amino-5-carboxypentyl]formamidino-7-deazaguanosine. This Thermococcus kodakarensis (strain ATCC BAA-918 / JCM 12380 / KOD1) (Pyrococcus kodakaraensis (strain KOD1)) protein is Archaeosine synthase subunit alpha.